Reading from the N-terminus, the 262-residue chain is Zinc import ATP-binding protein ZnuC (262 aa).

Positions 6-221 (IRLDKVAVTL…PAFVELFGKN (216 aa)) constitute an ABC transporter domain. 38 to 45 (GPNGAGKT) contacts ATP.

Belongs to the ABC transporter superfamily. Zinc importer (TC 3.A.1.15.5) family. As to quaternary structure, the complex is composed of two ATP-binding proteins (ZnuC), two transmembrane proteins (ZnuB) and a solute-binding protein (ZnuA).

It localises to the cell inner membrane. It carries out the reaction Zn(2+)(out) + ATP(in) + H2O(in) = Zn(2+)(in) + ADP(in) + phosphate(in) + H(+)(in). In terms of biological role, part of the ABC transporter complex ZnuABC involved in zinc import. Responsible for energy coupling to the transport system. This is Zinc import ATP-binding protein ZnuC from Pseudomonas syringae pv. syringae (strain B728a).